Here is a 483-residue protein sequence, read N- to C-terminus: ATP synthase subunit beta (483 aa).

169–176 provides a ligand contact to ATP; that stretch reads GGAGVGKT.

It belongs to the ATPase alpha/beta chains family. In terms of assembly, F-type ATPases have 2 components, CF(1) - the catalytic core - and CF(0) - the membrane proton channel. CF(1) has five subunits: alpha(3), beta(3), gamma(1), delta(1), epsilon(1). CF(0) has three main subunits: a(1), b(2) and c(9-12). The alpha and beta chains form an alternating ring which encloses part of the gamma chain. CF(1) is attached to CF(0) by a central stalk formed by the gamma and epsilon chains, while a peripheral stalk is formed by the delta and b chains.

The protein resides in the cell membrane. The catalysed reaction is ATP + H2O + 4 H(+)(in) = ADP + phosphate + 5 H(+)(out). Produces ATP from ADP in the presence of a proton gradient across the membrane. The catalytic sites are hosted primarily by the beta subunits. The polypeptide is ATP synthase subunit beta (Corynebacterium glutamicum (strain ATCC 13032 / DSM 20300 / JCM 1318 / BCRC 11384 / CCUG 27702 / LMG 3730 / NBRC 12168 / NCIMB 10025 / NRRL B-2784 / 534)).